Consider the following 339-residue polypeptide: Protein pelota homolog (339 aa).

The protein belongs to the eukaryotic release factor 1 family. Pelota subfamily. Monomer. The cofactor is a divalent metal cation.

It localises to the cytoplasm. Its function is as follows. May function in recognizing stalled ribosomes, interact with stem-loop structures in stalled mRNA molecules, and effect endonucleolytic cleavage of the mRNA. May play a role in the release non-functional ribosomes and degradation of damaged mRNAs. Has endoribonuclease activity. The polypeptide is Protein pelota homolog (pelA) (Thermoplasma acidophilum (strain ATCC 25905 / DSM 1728 / JCM 9062 / NBRC 15155 / AMRC-C165)).